Reading from the N-terminus, the 54-residue chain is MGEFGKTLITIVTAIIGVAIIAVIVSQRSNTAGVIQSATSGFSNILKSALAPII.

A helical membrane pass occupies residues 4–24 (FGKTLITIVTAIIGVAIIAVI).

It localises to the virion membrane. Its function is as follows. Component of the phage injection machinery. Required for DNA injection in the membrane transformation event. Involved in the formation of the membrane tail tube to connect the virus interior with the host cytosol. Essential for viral infectivity. The protein is Protein P32 (XXXII) of Enterobacteria phage PRD1 (Bacteriophage PRD1).